Reading from the N-terminus, the 51-residue chain is UPF0320 protein YOL166W-A (51 aa).

The protein belongs to the UPF0320 family.

The polypeptide is UPF0320 protein YOL166W-A (Saccharomyces cerevisiae (strain ATCC 204508 / S288c) (Baker's yeast)).